The primary structure comprises 642 residues: Bifunctional protein glk (642 aa).

The interval 1-340 is glucokinase; it reads MSTGAQSKAV…QLSNRSGGAS (340 aa). An ATP-binding site is contributed by 23-28; sequence ADVGGT. The HTH rpiR-type domain maps to 341-417; that stretch reads SAVFERIRQM…LKLATGLTGT (77 aa). Residues 341–642 are putative HTH-type transcriptional regulator; it reads SAVFERIRQM…SPAAKDVARD (302 aa). The H-T-H motif DNA-binding region spans 377 to 396; that stretch reads IVDIARKADVSQPTVIRFCR. Positions 461–600 constitute an SIS domain; sequence AIEILNGARR…AVGVAIRRAS (140 aa). The chain crosses the membrane as a helical span at residues 576 to 596; that stretch reads SMISRILHLLMIDILAVGVAI.

The protein in the N-terminal section; belongs to the bacterial glucokinase family.

It is found in the membrane. The enzyme catalyses D-glucose + ATP = D-glucose 6-phosphate + ADP + H(+). In Burkholderia orbicola (strain AU 1054), this protein is Bifunctional protein glk (glk).